Consider the following 469-residue polypeptide: MSAANMPAGFTDYKVADISLAAWGRRETIIAESEMPALMGLRRKYLAEQPLKGAKILGCIHMTIQTAVLIETLVALGAEVRWSSCNIFSTQDQAAASIAAAGIPVFAWKGETEEEYEWCLEQTILKDGQPWDANMILDDGGDLTELLHKKYPQVLDRVHGVTEETTTGVHRLLDMLAKGELKVPAINVNDSVTKSKNDNKYGCRHSLNDAIKRGTDHLLSGKQALVIGYGDVGKGSAQSLRQEGMIVKVSEVDPICAMQACMDGFELVSPFIDGINDGTEASIDKALLGKIDLIVTTTGNVNVCDANMLKALKKRAVVCNIGHFDNEIDTAFMRKNWAWEEVKPQVHKVHRTGAGSFDPQNDDYLILLAEGRLVNLGNATGHPSRIMDGSFANQVLAQIFLFEQKFADLPAEKKAERLTVEVLPKKLDEEVALEMVRGFGGVVTQLTKQQADYIGVTVEGPFKPHAYRY.

Residues Thr-63, Asp-139, and Glu-164 each contribute to the substrate site. 165 to 167 contacts NAD(+); sequence TTT. Residues Lys-194 and Asp-198 each contribute to the substrate site. NAD(+) is bound by residues Asn-199, 228–233, Glu-251, Asn-300, 321–323, and Asn-375; these read GYGDVG and IGH.

Belongs to the adenosylhomocysteinase family. Requires NAD(+) as cofactor.

Its subcellular location is the cytoplasm. The catalysed reaction is S-adenosyl-L-homocysteine + H2O = L-homocysteine + adenosine. Its pathway is amino-acid biosynthesis; L-homocysteine biosynthesis; L-homocysteine from S-adenosyl-L-homocysteine: step 1/1. May play a key role in the regulation of the intracellular concentration of adenosylhomocysteine. The polypeptide is Adenosylhomocysteinase (Pseudomonas putida (strain ATCC 700007 / DSM 6899 / JCM 31910 / BCRC 17059 / LMG 24140 / F1)).